The chain runs to 477 residues: ATP synthase subunit beta (477 aa).

Residue 151–158 (GGAGVGKT) participates in ATP binding.

This sequence belongs to the ATPase alpha/beta chains family. In terms of assembly, F-type ATPases have 2 components, CF(1) - the catalytic core - and CF(0) - the membrane proton channel. CF(1) has five subunits: alpha(3), beta(3), gamma(1), delta(1), epsilon(1). CF(0) has three main subunits: a(1), b(2) and c(9-12). The alpha and beta chains form an alternating ring which encloses part of the gamma chain. CF(1) is attached to CF(0) by a central stalk formed by the gamma and epsilon chains, while a peripheral stalk is formed by the delta and b chains.

The protein localises to the cell inner membrane. The enzyme catalyses ATP + H2O + 4 H(+)(in) = ADP + phosphate + 5 H(+)(out). Its function is as follows. Produces ATP from ADP in the presence of a proton gradient across the membrane. The catalytic sites are hosted primarily by the beta subunits. The polypeptide is ATP synthase subunit beta (Bradyrhizobium diazoefficiens (strain JCM 10833 / BCRC 13528 / IAM 13628 / NBRC 14792 / USDA 110)).